A 118-amino-acid chain; its full sequence is Protein TusC (118 aa).

It belongs to the DsrF/TusC family. In terms of assembly, heterohexamer, formed by a dimer of trimers. The hexameric TusBCD complex contains 2 copies each of TusB, TusC and TusD. The TusBCD complex interacts with TusE.

It localises to the cytoplasm. In terms of biological role, part of a sulfur-relay system required for 2-thiolation of 5-methylaminomethyl-2-thiouridine (mnm(5)s(2)U) at tRNA wobble positions. This Salmonella agona (strain SL483) protein is Protein TusC.